Consider the following 690-residue polypeptide: Polyribonucleotide nucleotidyltransferase (690 aa).

Mg(2+)-binding residues include D483 and D489. One can recognise a KH domain in the interval 550–609 (PKMEQITVDKKDIAAVIGKGGATIREIVEKSGAKLDVNDEGVVTVAAPDEESRNIAMQMI). Positions 619–686 (NKIYSGKVMK…DRGKVKLSMK (68 aa)) constitute an S1 motif domain.

The protein belongs to the polyribonucleotide nucleotidyltransferase family. Mg(2+) serves as cofactor.

Its subcellular location is the cytoplasm. The catalysed reaction is RNA(n+1) + phosphate = RNA(n) + a ribonucleoside 5'-diphosphate. Functionally, involved in mRNA degradation. Catalyzes the phosphorolysis of single-stranded polyribonucleotides processively in the 3'- to 5'-direction. The polypeptide is Polyribonucleotide nucleotidyltransferase (Pelagibacter ubique (strain HTCC1062)).